Here is a 218-residue protein sequence, read N- to C-terminus: Protein-L-isoaspartate O-methyltransferase (218 aa).

The active site involves Ser-60.

Belongs to the methyltransferase superfamily. L-isoaspartyl/D-aspartyl protein methyltransferase family.

Its subcellular location is the cytoplasm. It carries out the reaction [protein]-L-isoaspartate + S-adenosyl-L-methionine = [protein]-L-isoaspartate alpha-methyl ester + S-adenosyl-L-homocysteine. Catalyzes the methyl esterification of L-isoaspartyl residues in peptides and proteins that result from spontaneous decomposition of normal L-aspartyl and L-asparaginyl residues. It plays a role in the repair and/or degradation of damaged proteins. The protein is Protein-L-isoaspartate O-methyltransferase of Roseiflexus sp. (strain RS-1).